Here is a 130-residue protein sequence, read N- to C-terminus: Tripartite terminase subunit 2 (130 aa).

It belongs to the herpesviridae TRM2 protein family. As to quaternary structure, associates with TRM1 and TRM3 to form the tripartite terminase complex.

It localises to the host nucleus. Component of the molecular motor that translocates viral genomic DNA in empty capsid during DNA packaging. Forms a tripartite terminase complex together with TRM1 and TRM3 in the host cytoplasm. Once the complex reaches the host nucleus, it interacts with the capsid portal vertex. This portal forms a ring in which genomic DNA is translocated into the capsid. The chain is Tripartite terminase subunit 2 from Homo sapiens (Human).